A 369-amino-acid polypeptide reads, in one-letter code: MEGVTVVSFFLLFIATAMAAKSTVSFRDGMLPNGDFELGPKPSDMKGTEILNKLAIPNWEVTGFVEYIKSGHKQGDMLLVVPAGKFAVRLGNEASIKQRLKVVKGMYYSLTFSAARTCAQDERLNISVAPDSGVIPIQTVYSSSGWDLYAWAFQAESDVAEVVIHNPGVEEDPACGPLIDGVAMRSLYPPRPTNKNILKNGGFEEGPLVLPGSTTGVLIPPFIEDDHSPLPGWMVESLKAVKYVDVEHFSVPQGRRAIELVAGKESAIAQVVRTVIGKTYVLSFAVGDANNACKGSMVVEAFAGKDTLKVPYESKGTGGFKRASIRFVAVSTRSRIMFYSTFYAMRSDDFSSLCGPVIDDVKLISVRKP.

An N-terminal signal peptide occupies residues 1–19 (MEGVTVVSFFLLFIATAMA). Residue Asn-125 is glycosylated (N-linked (GlcNAc...) asparagine).

In terms of tissue distribution, expressed in roots, seedlings and leaves.

Its subcellular location is the secreted. It is found in the cell wall. Functionally, involved in the regulation of testa rupture during seed germination. Required during roots and rosettes development. The polypeptide is Protein DUF642 L-GALACTONO-1,4-LACTONE-RESPONSIVE GENE 2 (Arabidopsis thaliana (Mouse-ear cress)).